A 381-amino-acid polypeptide reads, in one-letter code: Periphilin-1 (381 aa).

Composition is skewed to basic and acidic residues over residues 1–28 (MWSEGRYDYDRLPRERVPPRSHPSDGYH), 39–65 (PLLDKRPPLLDKRPPLLARPDEGGYSR), and 79–121 (RSFS…DGFR). Disordered stretches follow at residues 1 to 65 (MWSE…GYSR) and 79 to 260 (RSFS…KSDE). A Nuclear localization signal motif is present at residues 117 to 123 (RDGFRRK). A Glycyl lysine isopeptide (Lys-Gly) (interchain with G-Cter in SUMO2) cross-link involves residue K123. S124, S128, S147, and S154 each carry phosphoserine. Residues 130–156 (YSRDRSPHKRDAPFFRESPVGRKDSPH) show a composition bias toward basic and acidic residues. The span at 157–168 (SRSGSSVSSRSY) shows a compositional bias: low complexity. The segment covering 175–187 (THSFHQSQHRKSS) has biased composition (basic residues). At S181 the chain carries Phosphoserine. K194 is covalently cross-linked (Glycyl lysine isopeptide (Lys-Gly) (interchain with G-Cter in SUMO2)). Residues 195–208 (RQNEAIRGRGKERS) show a composition bias toward basic and acidic residues. A Phosphoserine modification is found at S211. A Glycyl lysine isopeptide (Lys-Gly) (interchain with G-Cter in SUMO2) cross-link involves residue K213. Residues S215 and S219 each carry the phosphoserine modification. Low complexity predominate over residues 217 to 230 (DASPSSSSAVASSK). A compositionally biased stretch (basic and acidic residues) spans 231 to 260 (ALDKPSRLTEKELAEAESKWANETLEKSDE). K241 participates in a covalent cross-link: Glycyl lysine isopeptide (Lys-Gly) (interchain with G-Cter in SUMO2). At K249 the chain carries N6-acetyllysine; alternate. K249 is covalently cross-linked (Glycyl lysine isopeptide (Lys-Gly) (interchain with G-Cter in SUMO2); alternate). S339 bears the Phosphoserine mark. K342 is covalently cross-linked (Glycyl lysine isopeptide (Lys-Gly) (interchain with G-Cter in SUMO2)).

As to quaternary structure, homodimer. Component of the HUSH complex; at least composed of TASOR, PPHLN1 and MPHOSPH8. Interacts with SIN3A and HDAC1. May interact with PPL. In terms of tissue distribution, ubiquitously expressed. Strong expression in the developing somites and limbs, the embryonic nervous system and the adult brain.

Its subcellular location is the nucleus. The protein localises to the cytoplasm. It is found in the chromosome. Its function is as follows. Component of the HUSH complex, a multiprotein complex that mediates epigenetic repression. The HUSH complex is recruited to genomic loci rich in H3K9me3 and is probably required to maintain transcriptional silencing by promoting recruitment of SETDB1, a histone methyltransferase that mediates further deposition of H3K9me3. In the HUSH complex, contributes to the maintenance of the complex at chromatin. Acts as a transcriptional corepressor and regulates the cell cycle, probably via the HUSH complex. The HUSH complex is also involved in the silencing of unintegrated retroviral DNA: some part of the retroviral DNA formed immediately after infection remains unintegrated in the host genome and is transcriptionally repressed. May be involved in epithelial differentiation by contributing to epidermal integrity and barrier formation. This Mus musculus (Mouse) protein is Periphilin-1.